Here is a 358-residue protein sequence, read N- to C-terminus: Dihydroorotate dehydrogenase (quinone) (358 aa).

FMN contacts are provided by residues 61-65 (AGFDK) and Gly-85. Lys-65 provides a ligand contact to substrate. Residue 110–114 (NRFGL) coordinates substrate. Asn-139 and Asn-170 together coordinate FMN. Asn-170 serves as a coordination point for substrate. The active-site Nucleophile is Ser-173. Asn-175 lines the substrate pocket. FMN is bound by residues Lys-211 and Ser-239. 240-241 (NT) provides a ligand contact to substrate. FMN contacts are provided by residues Gly-263, Gly-292, and 313–314 (YS).

This sequence belongs to the dihydroorotate dehydrogenase family. Type 2 subfamily. In terms of assembly, monomer. The cofactor is FMN.

Its subcellular location is the cell membrane. The catalysed reaction is (S)-dihydroorotate + a quinone = orotate + a quinol. The protein operates within pyrimidine metabolism; UMP biosynthesis via de novo pathway; orotate from (S)-dihydroorotate (quinone route): step 1/1. Its function is as follows. Catalyzes the conversion of dihydroorotate to orotate with quinone as electron acceptor. The protein is Dihydroorotate dehydrogenase (quinone) of Methylorubrum extorquens (strain CM4 / NCIMB 13688) (Methylobacterium extorquens).